Here is a 92-residue protein sequence, read N- to C-terminus: CRISPR-associated endoribonuclease Cas2 (92 aa).

Aspartate 9 serves as a coordination point for Mg(2+).

This sequence belongs to the CRISPR-associated endoribonuclease Cas2 protein family. As to quaternary structure, homodimer, forms a heterotetramer with a Cas1 homodimer. It depends on Mg(2+) as a cofactor.

In terms of biological role, CRISPR (clustered regularly interspaced short palindromic repeat), is an adaptive immune system that provides protection against mobile genetic elements (viruses, transposable elements and conjugative plasmids). CRISPR clusters contain sequences complementary to antecedent mobile elements and target invading nucleic acids. CRISPR clusters are transcribed and processed into CRISPR RNA (crRNA). Functions as a ssRNA-specific endoribonuclease. Involved in the integration of spacer DNA into the CRISPR cassette. This is CRISPR-associated endoribonuclease Cas2 from Aeropyrum pernix (strain ATCC 700893 / DSM 11879 / JCM 9820 / NBRC 100138 / K1).